Here is a 212-residue protein sequence, read N- to C-terminus: External core antigen (212 aa).

An N-terminal signal peptide occupies residues methionine 1–alanine 19. The HBEAG stretch occupies residues glycine 25–leucine 27. The interval asparagine 165–cysteine 212 is disordered. Residues valine 178–serine 205 show a composition bias toward basic residues. The 1; half-length repeat unit spans residues serine 184–proline 190. The segment at serine 184–glutamine 206 is 3 X 8 AA repeats of S-P-R-R-R-R-S-Q. Residues serine 184–cysteine 212 constitute a propeptide that is removed on maturation. Repeat copies occupy residues serine 191–glutamine 198 and serine 199–glutamine 206.

Belongs to the orthohepadnavirus precore antigen family. Homodimerizes. In terms of processing, phosphorylated. Cleaved by host furin.

It is found in the secreted. It localises to the host nucleus. Its function is as follows. May regulate immune response to the intracellular capsid in acting as a T-cell tolerogen, by having an immunoregulatory effect which prevents destruction of infected cells by cytotoxic T-cells. This immune regulation may predispose to chronicity during perinatal infections and prevent severe liver injury during adult infections. The polypeptide is External core antigen (Hepatitis B virus genotype F2 subtype adw4q (isolate Senegal/9203) (HBV-F)).